The following is a 483-amino-acid chain: Protein nucleotidyltransferase YdiU (483 aa).

ATP contacts are provided by Gly81, Gly83, Arg84, Lys103, Asp115, Gly116, Arg166, and Arg173. Catalysis depends on Asp244, which acts as the Proton acceptor. Mg(2+)-binding residues include Asn245 and Asp254. Asp254 contributes to the ATP binding site.

This sequence belongs to the SELO family. It depends on Mg(2+) as a cofactor. Requires Mn(2+) as cofactor.

It catalyses the reaction L-seryl-[protein] + ATP = 3-O-(5'-adenylyl)-L-seryl-[protein] + diphosphate. It carries out the reaction L-threonyl-[protein] + ATP = 3-O-(5'-adenylyl)-L-threonyl-[protein] + diphosphate. The enzyme catalyses L-tyrosyl-[protein] + ATP = O-(5'-adenylyl)-L-tyrosyl-[protein] + diphosphate. The catalysed reaction is L-histidyl-[protein] + UTP = N(tele)-(5'-uridylyl)-L-histidyl-[protein] + diphosphate. It catalyses the reaction L-seryl-[protein] + UTP = O-(5'-uridylyl)-L-seryl-[protein] + diphosphate. It carries out the reaction L-tyrosyl-[protein] + UTP = O-(5'-uridylyl)-L-tyrosyl-[protein] + diphosphate. Functionally, nucleotidyltransferase involved in the post-translational modification of proteins. It can catalyze the addition of adenosine monophosphate (AMP) or uridine monophosphate (UMP) to a protein, resulting in modifications known as AMPylation and UMPylation. In Shewanella pealeana (strain ATCC 700345 / ANG-SQ1), this protein is Protein nucleotidyltransferase YdiU.